Here is a 725-residue protein sequence, read N- to C-terminus: Probable dipeptidyl-peptidase 5 (725 aa).

An N-terminal signal peptide occupies residues 1–18 (MGALRWLSIAATASTALA). Asn75, Asn96, Asn153, Asn258, Asn383, and Asn453 each carry an N-linked (GlcNAc...) asparagine glycan. Ser563 functions as the Charge relay system in the catalytic mechanism. An N-linked (GlcNAc...) asparagine glycan is attached at Asn610. Catalysis depends on charge relay system residues Asp646 and His678.

It belongs to the peptidase S9C family.

The protein localises to the secreted. Extracellular dipeptidyl-peptidase which removes N-terminal dipeptides sequentially from polypeptides having unsubstituted N-termini. The protein is Probable dipeptidyl-peptidase 5 (dpp5) of Aspergillus flavus (strain ATCC 200026 / FGSC A1120 / IAM 13836 / NRRL 3357 / JCM 12722 / SRRC 167).